The primary structure comprises 267 residues: Very long chain fatty acid elongase 6 (267 aa).

N-linked (GlcNAc...) asparagine glycosylation occurs at Asn-2. 7 consecutive transmembrane segments (helical) span residues 34–51 (FLFS…RHLM), 70–90 (LAVF…YILM), 111–131 (FWAY…IFII), 136–156 (KLIF…WYSY), 159–179 (MVAG…VMYS), 197–217 (FITL…YLVF), and 234–254 (IFWS…FFFE).

This sequence belongs to the ELO family. ELOVL6 subfamily. Post-translationally, N-Glycosylated. Expressed in liver and barely in brain.

The protein localises to the endoplasmic reticulum membrane. The catalysed reaction is a very-long-chain acyl-CoA + malonyl-CoA + H(+) = a very-long-chain 3-oxoacyl-CoA + CO2 + CoA. It carries out the reaction hexadecanoyl-CoA + malonyl-CoA + H(+) = 3-oxooctadecanoyl-CoA + CO2 + CoA. It catalyses the reaction (9Z)-hexadecenoyl-CoA + malonyl-CoA + H(+) = 3-oxo-(11Z)-octadecenoyl-CoA + CO2 + CoA. The enzyme catalyses dodecanoyl-CoA + malonyl-CoA + H(+) = 3-oxotetradecanoyl-CoA + CO2 + CoA. The catalysed reaction is tetradecanoyl-CoA + malonyl-CoA + H(+) = 3-oxohexadecanoyl-CoA + CO2 + CoA. It carries out the reaction (9Z)-octadecenoyl-CoA + malonyl-CoA + H(+) = 3-oxo-(11Z)-eicosenoyl-CoA + CO2 + CoA. It catalyses the reaction (9Z,12Z)-octadecadienoyl-CoA + malonyl-CoA + H(+) = (11Z,14Z)-3-oxoicosa-11,14-dienoyl-CoA + CO2 + CoA. The enzyme catalyses (9Z,12Z,15Z)-octadecatrienoyl-CoA + malonyl-CoA + H(+) = (11Z,14Z,17Z)-3-oxoeicosatrienoyl-CoA + CO2 + CoA. It participates in lipid metabolism; fatty acid biosynthesis. The reaction is stimulated by the presence of HSD17B12, the enzyme catalyzing the second step of the elongation cycle. Catalyzes the first and rate-limiting reaction of the four reactions that constitute the long-chain fatty acids elongation cycle. This endoplasmic reticulum-bound enzymatic process allows the addition of 2 carbons to the chain of long- and very long-chain fatty acids (VLCFAs) per cycle. Condensing enzyme that elongates fatty acids with 12, 14 and 16 carbons with higher activity toward C16:0 acyl-CoAs. Catalyzes the synthesis of unsaturated C16 long chain fatty acids and, to a lesser extent, C18:0 and those with low desaturation degree. May participate in the production of saturated and monounsaturated VLCFAs of different chain lengths that are involved in multiple biological processes as precursors of membrane lipids and lipid mediators. This Rattus norvegicus (Rat) protein is Very long chain fatty acid elongase 6.